The chain runs to 548 residues: Folylpolyglutamate synthase (548 aa).

Residue 130–133 coordinates ATP; sequence GKGS. Mg(2+) contacts are provided by Ser157, Glu234, and His262. ATP contacts are provided by Arg382 and Asp396.

Belongs to the folylpolyglutamate synthase family. A monovalent cation serves as cofactor.

It is found in the mitochondrion inner membrane. The protein localises to the mitochondrion matrix. The protein resides in the cytoplasm. The catalysed reaction is (6S)-5,6,7,8-tetrahydrofolyl-(gamma-L-Glu)(n) + L-glutamate + ATP = (6S)-5,6,7,8-tetrahydrofolyl-(gamma-L-Glu)(n+1) + ADP + phosphate + H(+). It participates in cofactor biosynthesis; tetrahydrofolylpolyglutamate biosynthesis. Functionally, catalyzes conversion of folates to polyglutamate derivatives allowing concentration of folate compounds in the cell and the intracellular retention of these cofactors, which are important substrates for most of the folate-dependent enzymes that are involved in one-carbon transfer reactions involved in purine, pyrimidine and amino acid synthesis. Required for methionine synthesis and maintenance of intact mitochondrial DNA. Involved in telomere maintenance. The sequence is that of Folylpolyglutamate synthase from Saccharomyces cerevisiae (strain FostersO) (Baker's yeast).